A 231-amino-acid polypeptide reads, in one-letter code: Protein PIMREG (231 aa).

The disordered stretch occupies residues methionine 1–leucine 44. Phosphoserine occurs at positions 11 and 16. Short sequence motifs (D-box) lie at residues arginine 14–leucine 17 and proline 53–alanine 56. The segment covering leucine 17 to threonine 29 has biased composition (basic and acidic residues). At serine 72 the chain carries Phosphoserine. Disordered regions lie at residues lysine 115–threonine 138 and histidine 152–proline 197. Serine 128 is subject to Phosphoserine; by Uhmk1; in vitro. Residues proline 178 to glutamate 190 are compositionally biased toward polar residues. Residues serine 191 and serine 193 each carry the phosphoserine modification.

In terms of assembly, interacts with PICALM; this interaction may target PICALM to the nucleus. During mitosis, associates with HDAC2 and MTA2 subunits of the chromatin-remodeling NuRD complex; this association is strongest at prometaphase and decreases as the cell progresses through metaphase and anaphase. Ubiquitinated by the anaphase-promoting complex/cyclosome (APC/C) complex in the presence of FZR1, leading to its degradation by the proteasome during mitotic exit. However, degradation is not essential for normal mitotic progression within a single cell cycle. As to expression, mainly expressed in thymus and ovary. Expressed in all T-cell subpopulations isolated from the thymus, macrophages, pro-erythrocytes, granulocytes, mast cells and progenitor cells.

The protein localises to the nucleus. It localises to the nucleolus. Functionally, during mitosis, may play a role in the metaphase-to-anaphase transition. The polypeptide is Protein PIMREG (Mus musculus (Mouse)).